A 208-amino-acid chain; its full sequence is Negative modulator of initiation of replication (208 aa).

An interaction with DNA region spans residues 115–116 (AV).

It belongs to the SeqA family. As to quaternary structure, homodimer. Polymerizes to form helical filaments.

It localises to the cytoplasm. Negative regulator of replication initiation, which contributes to regulation of DNA replication and ensures that replication initiation occurs exactly once per chromosome per cell cycle. Binds to pairs of hemimethylated GATC sequences in the oriC region, thus preventing assembly of replication proteins and re-initiation at newly replicated origins. Repression is relieved when the region becomes fully methylated. This Shewanella frigidimarina (strain NCIMB 400) protein is Negative modulator of initiation of replication.